Reading from the N-terminus, the 160-residue chain is Transcriptional repressor NrdR (160 aa).

Polar residues predominate over residues 1-11 (MRCPNCNSLDT). A disordered region spans residues 1 to 20 (MRCPNCNSLDTQVKDSRPTE). A zinc finger spans residues 3 to 34 (CPNCNSLDTQVKDSRPTEDSSVIRRRRVCIAC). The region spanning 49-139 (LIVIKRNGRR…VYRNFREAKD (91 aa)) is the ATP-cone domain.

Belongs to the NrdR family. It depends on Zn(2+) as a cofactor.

Negatively regulates transcription of bacterial ribonucleotide reductase nrd genes and operons by binding to NrdR-boxes. The polypeptide is Transcriptional repressor NrdR (Rhodopseudomonas palustris (strain ATCC BAA-98 / CGA009)).